Here is a 587-residue protein sequence, read N- to C-terminus: Polyadenylate-binding protein-interacting protein 3 (587 aa).

The Sm domain occupies 51–132; sequence LLVYFTTCNI…LVQVIAKDLP (82 aa). The interval 422–503 is disordered; sequence AKSENSSGWP…QSPQSPVFDG (82 aa). Low complexity predominate over residues 431–464; that stretch reads PGSSISRNSENSAASSASNLPILSPSSSGSLSSE. Residues 467–475 carry the PAM2-like 1; degenerate motif; that stretch reads TLNPNAKEF. Positions 476–486 match the PAM2-like 2 motif; that stretch reads KLNPNAKSFKP. Residues 486–498 show a composition bias toward polar residues; sequence PSPSATRPQSPQS.

This chain is Polyadenylate-binding protein-interacting protein 3 (CID3), found in Arabidopsis thaliana (Mouse-ear cress).